A 225-amino-acid chain; its full sequence is UPF0758 protein BPP1850 (225 aa).

The 123-residue stretch at 103-225 (ALANPDLVRR…TVSMAAQGHL (123 aa)) folds into the MPN domain. Residues H174, H176, and D187 each contribute to the Zn(2+) site. The JAMM motif motif lies at 174 to 187 (HNHPGGTAAASAAD).

This sequence belongs to the UPF0758 family.

The polypeptide is UPF0758 protein BPP1850 (Bordetella parapertussis (strain 12822 / ATCC BAA-587 / NCTC 13253)).